Here is a 518-residue protein sequence, read N- to C-terminus: Serine hydroxymethyltransferase, mitochondrial (518 aa).

A mitochondrion-targeting transit peptide spans 1 to 31 (MAMAMALRKLSSSVNKSSRPLFSASSLYYKS). N6-(pyridoxal phosphate)lysine is present on Lys-287.

Belongs to the SHMT family. As to quaternary structure, homotetramer. Requires pyridoxal 5'-phosphate as cofactor.

It localises to the mitochondrion. The catalysed reaction is (6R)-5,10-methylene-5,6,7,8-tetrahydrofolate + glycine + H2O = (6S)-5,6,7,8-tetrahydrofolate + L-serine. Its pathway is one-carbon metabolism; tetrahydrofolate interconversion. Its function is as follows. Catalyzes the interconversion of serine and glycine. This chain is Serine hydroxymethyltransferase, mitochondrial, found in Pisum sativum (Garden pea).